A 386-amino-acid polypeptide reads, in one-letter code: Ribosomal RNA small subunit methyltransferase H (386 aa).

S-adenosyl-L-methionine contacts are provided by residues 97 to 99, Asp116, Tyr143, Asp167, and Gln174; that span reads GGH.

The protein belongs to the methyltransferase superfamily. RsmH family.

The protein resides in the cytoplasm. It carries out the reaction cytidine(1402) in 16S rRNA + S-adenosyl-L-methionine = N(4)-methylcytidine(1402) in 16S rRNA + S-adenosyl-L-homocysteine + H(+). Specifically methylates the N4 position of cytidine in position 1402 (C1402) of 16S rRNA. The polypeptide is Ribosomal RNA small subunit methyltransferase H (Mycolicibacterium paratuberculosis (strain ATCC BAA-968 / K-10) (Mycobacterium paratuberculosis)).